Reading from the N-terminus, the 101-residue chain is Small ribosomal subunit protein uS10 (101 aa).

The protein belongs to the universal ribosomal protein uS10 family. As to quaternary structure, part of the 30S ribosomal subunit.

Its function is as follows. Involved in the binding of tRNA to the ribosomes. The chain is Small ribosomal subunit protein uS10 from Mycobacterium bovis (strain ATCC BAA-935 / AF2122/97).